Consider the following 174-residue polypeptide: Protein RESTRICTED TEV MOVEMENT 1 (174 aa).

The 152-residue stretch at 1 to 152 (MKIGPVGKHD…LQYIGVYLRP (152 aa)) folds into the Jacalin-type lectin domain.

The protein belongs to the jacalin lectin family. Self-interacts. Interacts with RTM3. As to expression, expressed at low levels exclusively in phloem-associated cells (e.g. sieve elements and adjacent cells).

It is found in the cytoplasm. Required for the restriction of long-distance movement of the pathogenic tobacco etch virus (TEV) without causing a hypersensitive response or inducing systemic acquired resistance. This chain is Protein RESTRICTED TEV MOVEMENT 1 (RTM1), found in Arabidopsis thaliana (Mouse-ear cress).